The primary structure comprises 180 residues: uncharacterized protein (180 aa).

Positions 3–33 form a coiled coil; sequence QQQSNNSNDNKEQLDRVIESLNRVNSETKQI.

This is an uncharacterized protein from Acanthamoeba polyphaga (Amoeba).